Reading from the N-terminus, the 247-residue chain is Myeloid leukemia factor 2 (247 aa).

Positions 122–247 are disordered; the sequence is ETSEMRSAPG…PSRQSRRYDW (126 aa). Basic and acidic residues predominate over residues 134–144; sequence RETRRTVRDSD. Positions 154-169 are enriched in basic residues; it reads HHIRDRAHILQRSRNH. The span at 170–179 shows a compositional bias: basic and acidic residues; sequence RTGDQEERQD. A compositionally biased stretch (acidic residues) spans 182-192; it reads NLDESEAAAFD. Residues 193-225 show a composition bias toward basic and acidic residues; the sequence is DEWRRETSRYRQQRPLEFRRHEASVGGGRRAEG. A phosphoserine mark is found at S216, S237, and S239.

The protein belongs to the MLF family.

It localises to the cytoplasm. The protein resides in the nucleus. The polypeptide is Myeloid leukemia factor 2 (Mlf2) (Mus musculus (Mouse)).